A 69-amino-acid polypeptide reads, in one-letter code: Small, acid-soluble spore protein 1 (69 aa).

This sequence belongs to the alpha/beta-type SASP family.

Its function is as follows. SASP are bound to spore DNA. They are double-stranded DNA-binding proteins that cause DNA to change to an a-like conformation. They protect the DNA backbone from chemical and enzymatic cleavage and are thus involved in dormant spore's high resistance to UV light. The protein is Small, acid-soluble spore protein 1 (Su-1) of Sporosarcina ureae.